Reading from the N-terminus, the 199-residue chain is NADH-quinone oxidoreductase subunit C (199 aa).

Belongs to the complex I 30 kDa subunit family. In terms of assembly, NDH-1 is composed of 14 different subunits. Subunits NuoB, C, D, E, F, and G constitute the peripheral sector of the complex.

The protein localises to the cell inner membrane. It carries out the reaction a quinone + NADH + 5 H(+)(in) = a quinol + NAD(+) + 4 H(+)(out). NDH-1 shuttles electrons from NADH, via FMN and iron-sulfur (Fe-S) centers, to quinones in the respiratory chain. The immediate electron acceptor for the enzyme in this species is believed to be ubiquinone. Couples the redox reaction to proton translocation (for every two electrons transferred, four hydrogen ions are translocated across the cytoplasmic membrane), and thus conserves the redox energy in a proton gradient. The polypeptide is NADH-quinone oxidoreductase subunit C (Leptothrix cholodnii (strain ATCC 51168 / LMG 8142 / SP-6) (Leptothrix discophora (strain SP-6))).